We begin with the raw amino-acid sequence, 113 residues long: Hydrogenase maturation factor HypA (113 aa).

Position 2 (His-2) interacts with Ni(2+). Residues Cys-73, Cys-76, Cys-89, and Cys-92 each contribute to the Zn(2+) site.

Belongs to the HypA/HybF family.

Involved in the maturation of [NiFe] hydrogenases. Required for nickel insertion into the metal center of the hydrogenase. This is Hydrogenase maturation factor HypA from Cereibacter sphaeroides (Rhodobacter sphaeroides).